Consider the following 105-residue polypeptide: DNA-directed RNA polymerases I and III subunit RPAC2 (105 aa).

It belongs to the archaeal Rpo11/eukaryotic RPB11/RPC19 RNA polymerase subunit family. Component of the RNA polymerase I (Pol I) and RNA polymerase III (Pol III) complexes consisting of at least 13 and 17 subunits, respectively.

It localises to the nucleus. Functionally, DNA-dependent RNA polymerase catalyzes the transcription of DNA into RNA using the four ribonucleoside triphosphates as substrates. Common core component of RNA polymerases I and III which synthesize ribosomal RNA precursors and small RNAs, such as 5S rRNA and tRNAs, respectively. The sequence is that of DNA-directed RNA polymerases I and III subunit RPAC2 from Drosophila melanogaster (Fruit fly).